The primary structure comprises 143 residues: Putative 2'-deoxynucleoside 5'-phosphate N-hydrolase 1 (143 aa).

Substrate-binding positions include His-37, Glu-82, and 106–108 (SAM).

It belongs to the 2'-deoxynucleoside 5'-phosphate N-hydrolase 1 family. As to quaternary structure, monomer and homodimer.

The enzyme catalyses a pyrimidine 2'-deoxyribonucleoside 5'-phosphate + H2O = a pyrimidine nucleobase + 2-deoxy-D-ribose 5-phosphate. It carries out the reaction a purine 2'-deoxyribonucleoside 5'-phosphate + H2O = a purine nucleobase + 2-deoxy-D-ribose 5-phosphate. In terms of biological role, catalyzes the cleavage of the N-glycosidic bond of deoxyribonucleoside 5'-monophosphates to yield deoxyribose 5-phosphate and a purine or pyrimidine base. This Thermofilum pendens (strain DSM 2475 / Hrk 5) protein is Putative 2'-deoxynucleoside 5'-phosphate N-hydrolase 1.